A 2863-amino-acid polypeptide reads, in one-letter code: Lipopolysaccharide-responsive and beige-like anchor protein (2863 aa).

Disordered stretches follow at residues methionine 1–leucine 35, valine 969–serine 1005, and glutamate 1018–threonine 1039. Alanine 2 is subject to N-acetylalanine. Residues serine 10, serine 979, and serine 1003 each carry the phosphoserine modification. Residues phenylalanine 985–serine 1005 show a composition bias toward polar residues. A coiled-coil region spans residues asparagine 1006–aspartate 1053. Residues glutamate 1024–leucine 1034 are compositionally biased toward acidic residues. Residues serine 1100, serine 1135, and serine 1139 each carry the phosphoserine modification. Positions proline 1161–aspartate 1176 are enriched in basic and acidic residues. The tract at residues proline 1161 to glutamate 1193 is disordered. Residues serine 1177–glutamate 1193 show a composition bias toward polar residues. Phosphoserine occurs at positions 1233, 1247, and 1261. The stretch at serine 1301–aspartate 1343 is one WD 1 repeat. Phosphoserine occurs at positions 1488 and 1498. Residues phenylalanine 1531 to tyrosine 1548 traverse the membrane as a helical segment. Residues leucine 1586 to serine 1599 are compositionally biased toward low complexity. Disordered regions lie at residues leucine 1586–proline 1668 and glutamine 1759–aspartate 1789. Phosphoserine is present on serine 1605. Basic and acidic residues predominate over residues lysine 1650 to threonine 1664. Residues serine 1767, serine 1770, and serine 2064 each carry the phosphoserine modification. Residues glycine 1769–aspartate 1789 show a composition bias toward polar residues. One can recognise a BEACH-type PH domain in the interval asparagine 2073–proline 2181. In terms of domain architecture, BEACH spans alanine 2200–arginine 2489. Phosphoserine is present on serine 2496. WD repeat units lie at residues aspartate 2591–valine 2633, glycine 2636–glycine 2679, glycine 2695–glutamate 2735, glutamate 2777–alanine 2816, and glycine 2819–glutamate 2858.

In terms of assembly, interacts with TOM1 and TOLLIP. In terms of tissue distribution, ubiquitous.

It is found in the cell membrane. Its subcellular location is the endoplasmic reticulum membrane. The protein localises to the golgi apparatus. It localises to the trans-Golgi network membrane. The protein resides in the lysosome membrane. Functionally, involved in coupling signal transduction and vesicle trafficking to enable polarized secretion and/or membrane deposition of immune effector molecules. Involved in phagophore growth during mitophagy by regulating ATG9A trafficking to mitochondria. The protein is Lipopolysaccharide-responsive and beige-like anchor protein of Homo sapiens (Human).